The following is a 144-amino-acid chain: Cytochrome c oxidase subunit 4 isoform 1, mitochondrial (144 aa).

The Mitochondrial matrix segment spans residues 1–73 (SVVKSEDFSL…SFAEMNRGSN (73 aa)). The residue at position 4 (lysine 4) is an N6-acetyllysine; alternate. The residue at position 4 (lysine 4) is an N6-succinyllysine; alternate. Position 28 is an N6-acetyllysine (lysine 28). Phosphoserine occurs at positions 31 and 33. At lysine 35 the chain carries N6-acetyllysine; alternate. At lysine 35 the chain carries N6-succinyllysine; alternate. Lysine 42 is modified (N6-acetyllysine). A helical membrane pass occupies residues 74–99 (EWKTVVGGAMFFIGFTALVIMWQKHY). Over 100-144 (VYGPLPQSFDKEWVAKQTKRMLDMKVNPIQGLASKWDYEKNEWKK) the chain is Mitochondrial intermembrane.

It belongs to the cytochrome c oxidase IV family. Component of the cytochrome c oxidase (complex IV, CIV), a multisubunit enzyme composed of 14 subunits. The complex is composed of a catalytic core of 3 subunits MT-CO1, MT-CO2 and MT-CO3, encoded in the mitochondrial DNA, and 11 supernumerary subunits COX4I, COX5A, COX5B, COX6A, COX6B, COX6C, COX7A, COX7B, COX7C, COX8 and NDUFA4, which are encoded in the nuclear genome. The complex exists as a monomer or a dimer and forms supercomplexes (SCs) in the inner mitochondrial membrane with NADH-ubiquinone oxidoreductase (complex I, CI) and ubiquinol-cytochrome c oxidoreductase (cytochrome b-c1 complex, complex III, CIII), resulting in different assemblies (supercomplex SCI(1)III(2)IV(1) and megacomplex MCI(2)III(2)IV(2)). Interacts with PHB2; the interaction decreases in absence of SPHK2. Interacts with AFG1L. Interacts with ABCB7; this interaction allows the regulation of cellular iron homeostasis and cellular reactive oxygen species (ROS) levels in cardiomyocytes. Interacts with FLVCR2; this interaction occurs in the absence of heme and is disrupted upon heme binding. Interacts with IRGC.

The protein resides in the mitochondrion inner membrane. It participates in energy metabolism; oxidative phosphorylation. Its function is as follows. Component of the cytochrome c oxidase, the last enzyme in the mitochondrial electron transport chain which drives oxidative phosphorylation. The respiratory chain contains 3 multisubunit complexes succinate dehydrogenase (complex II, CII), ubiquinol-cytochrome c oxidoreductase (cytochrome b-c1 complex, complex III, CIII) and cytochrome c oxidase (complex IV, CIV), that cooperate to transfer electrons derived from NADH and succinate to molecular oxygen, creating an electrochemical gradient over the inner membrane that drives transmembrane transport and the ATP synthase. Cytochrome c oxidase is the component of the respiratory chain that catalyzes the reduction of oxygen to water. Electrons originating from reduced cytochrome c in the intermembrane space (IMS) are transferred via the dinuclear copper A center (CU(A)) of subunit 2 and heme A of subunit 1 to the active site in subunit 1, a binuclear center (BNC) formed by heme A3 and copper B (CU(B)). The BNC reduces molecular oxygen to 2 water molecules using 4 electrons from cytochrome c in the IMS and 4 protons from the mitochondrial matrix. The protein is Cytochrome c oxidase subunit 4 isoform 1, mitochondrial (COX4I1) of Pan troglodytes (Chimpanzee).